Consider the following 302-residue polypeptide: MTSNEKEMGKSELLVVTGMSGAGKSLVIQSLEDMGFFCVDNLPPVLLPKFVELMAQGNPSLQKVAIAIDLRGKELFKSLVKEIDIIKSRNDVILDVMFLEAKTEKIISRYKESRRAHPLNEQGQRSLIDAINEEREHLSEIRSIANYVIDTTKLKPKELKQRISKFYLDENFETFTINVTSFGFKHGIQMDADLVFDVRFLPNPYYVEELRPFIGLDEPVYNYVMKWKETQIFFDKLTDLLKFMIPGYKKEGKSQLVIAIGCTGGQHRSVALAKRLAEYLNEIFEYNVYVHHRDAHIESGER.

Residue 18–25 coordinates ATP; the sequence is GMSGAGKS. 69–72 lines the GTP pocket; it reads DLRG.

This sequence belongs to the RapZ-like family.

Displays ATPase and GTPase activities. The polypeptide is Nucleotide-binding protein SERP0433 (Staphylococcus epidermidis (strain ATCC 35984 / DSM 28319 / BCRC 17069 / CCUG 31568 / BM 3577 / RP62A)).